The sequence spans 252 residues: MILYEYPFNERIRTLLRLEDLFDRLDYFLGQEHPLQHHVALTTLFEIIDVAGRADLKTDLIKELERQRQALTALRVNPQIDQEALDAIIGEIEQGIAMLNQTVGKAGQLLTDNEWLTSIRSRAIIPGGTCEFDLPAYYAWQHRPAEERRADILKWARPLVALRAGTSTVLRLLRESGQSGKVIATGGSYQQMLSGRSYQLMQVHLDDSLLAFIPEMSANKYMLWVRFTQQDGDLRPRSVDADIPFLLKLCNF.

This sequence belongs to the ZapD family. In terms of assembly, interacts with FtsZ.

The protein resides in the cytoplasm. Its function is as follows. Cell division factor that enhances FtsZ-ring assembly. Directly interacts with FtsZ and promotes bundling of FtsZ protofilaments, with a reduction in FtsZ GTPase activity. The sequence is that of Cell division protein ZapD from Cupriavidus pinatubonensis (strain JMP 134 / LMG 1197) (Cupriavidus necator (strain JMP 134)).